We begin with the raw amino-acid sequence, 701 residues long: Polyribonucleotide nucleotidyltransferase (701 aa).

Mg(2+) is bound by residues Asp480 and Asp486. Residues 547–606 form the KH domain; it reads PKIDTIKIDVDKIKVVIGKGGETIDKIIAETGVKIDIDDEGNVSIYSSDQAAINRTKEII. In terms of domain architecture, S1 motif spans 616 to 684; sequence GEVYHAKVVR…EKGRVDASMK (69 aa). Positions 682–701 are disordered; the sequence is SMKALIPRPPKPEKKEEKHD. A compositionally biased stretch (basic and acidic residues) spans 691 to 701; that stretch reads PKPEKKEEKHD.

Belongs to the polyribonucleotide nucleotidyltransferase family. Requires Mg(2+) as cofactor.

It is found in the cytoplasm. It catalyses the reaction RNA(n+1) + phosphate = RNA(n) + a ribonucleoside 5'-diphosphate. Functionally, involved in mRNA degradation. Catalyzes the phosphorolysis of single-stranded polyribonucleotides processively in the 3'- to 5'-direction. This Streptococcus pyogenes serotype M12 (strain MGAS2096) protein is Polyribonucleotide nucleotidyltransferase.